Reading from the N-terminus, the 382-residue chain is Chaperone protein DnaJ (382 aa).

The 65-residue stretch at 5–69 folds into the J domain; that stretch reads DYYEILGVSK…EKRARYDRFG (65 aa). The CR-type zinc finger occupies 137–219; it reads GKETEIEIPR…CGGTGRVKRR (83 aa). 8 residues coordinate Zn(2+): cysteine 150, cysteine 153, cysteine 167, cysteine 170, cysteine 193, cysteine 196, cysteine 207, and cysteine 210. 4 CXXCXGXG motif repeats span residues 150-157, 167-174, 193-200, and 207-214; these read CDTCQGSG, CPHCHGSG, CPVCGGTG, and CPTCGGTG. The tract at residues 154 to 175 is disordered; that stretch reads QGSGAKPGTSPTSCPHCHGSGQ.

This sequence belongs to the DnaJ family. Homodimer. It depends on Zn(2+) as a cofactor.

It localises to the cytoplasm. In terms of biological role, participates actively in the response to hyperosmotic and heat shock by preventing the aggregation of stress-denatured proteins and by disaggregating proteins, also in an autonomous, DnaK-independent fashion. Unfolded proteins bind initially to DnaJ; upon interaction with the DnaJ-bound protein, DnaK hydrolyzes its bound ATP, resulting in the formation of a stable complex. GrpE releases ADP from DnaK; ATP binding to DnaK triggers the release of the substrate protein, thus completing the reaction cycle. Several rounds of ATP-dependent interactions between DnaJ, DnaK and GrpE are required for fully efficient folding. Also involved, together with DnaK and GrpE, in the DNA replication of plasmids through activation of initiation proteins. The chain is Chaperone protein DnaJ from Geobacillus kaustophilus (strain HTA426).